The primary structure comprises 103 residues: Small ribosomal subunit protein uS10 (103 aa).

Belongs to the universal ribosomal protein uS10 family. Part of the 30S ribosomal subunit.

Involved in the binding of tRNA to the ribosomes. This is Small ribosomal subunit protein uS10 from Shewanella loihica (strain ATCC BAA-1088 / PV-4).